A 397-amino-acid polypeptide reads, in one-letter code: Acetate kinase (397 aa).

Position 9 (N9) interacts with Mg(2+). K16 provides a ligand contact to ATP. Substrate is bound at residue R87. Catalysis depends on D144, which acts as the Proton donor/acceptor. ATP is bound by residues H204–G208, D279–R281, and G327–N331. E381 provides a ligand contact to Mg(2+).

Belongs to the acetokinase family. Homodimer. Mg(2+) serves as cofactor. Mn(2+) is required as a cofactor.

It is found in the cytoplasm. It carries out the reaction acetate + ATP = acetyl phosphate + ADP. It functions in the pathway metabolic intermediate biosynthesis; acetyl-CoA biosynthesis; acetyl-CoA from acetate: step 1/2. Its function is as follows. Catalyzes the formation of acetyl phosphate from acetate and ATP. Can also catalyze the reverse reaction. The chain is Acetate kinase from Chromobacterium violaceum (strain ATCC 12472 / DSM 30191 / JCM 1249 / CCUG 213 / NBRC 12614 / NCIMB 9131 / NCTC 9757 / MK).